Reading from the N-terminus, the 447-residue chain is MLSTMSPRLSLLLLWLLLLINAAHPVGALPRLCDVRRVLLEERAECLRELSEEKKALGPKTASGCERFWDNMSCWPSSALAQTVEVPCPKFLRMFSGRNGSLFRNCTKDGWSETFPRPDLACGVNMNGSFNERRHAYLLKLKVMYTVGYSSSLAMLLVALSILCSFRRLHCTRNYIHMHLFVSFILRALSNFIKDAVLFPADDVTYCDAHRAGCKLVMIFFQYCIMANYAWLLVEGLYLHTLLAISFFSERKCLQAFVLFGWGSPAIFVALWAVTRHFLEDFGCWDINSNASIWWVIRGPVILSIVINFIFFINILRILMRKLRTQETRGNETHHYKRLAKSTLLLIPLFGIHYIVFAFSPEGAMEVQLFFELALGSFQGLVVAVLYCFLNGELEVQKKWRQWHLQEFPLRPVALSNSFSNATNGPTHSTKAGTSEQSRSIPGANVI.

The first 28 residues, 1 to 28 (MLSTMSPRLSLLLLWLLLLINAAHPVGA), serve as a signal peptide directing secretion. Residues 29-140 (LPRLCDVRRV…NERRHAYLLK (112 aa)) lie on the Extracellular side of the membrane. Intrachain disulfides connect Cys46-Cys74, Cys65-Cys106, and Cys88-Cys122. Asn71, Asn99, Asn105, and Asn127 each carry an N-linked (GlcNAc...) asparagine glycan. A helical transmembrane segment spans residues 141-166 (LKVMYTVGYSSSLAMLLVALSILCSF). Topologically, residues 167–173 (RRLHCTR) are cytoplasmic. A helical transmembrane segment spans residues 174–194 (NYIHMHLFVSFILRALSNFIK). Topologically, residues 195 to 215 (DAVLFPADDVTYCDAHRAGCK) are extracellular. Cys214 and Cys284 are oxidised to a cystine. A helical membrane pass occupies residues 216-238 (LVMIFFQYCIMANYAWLLVEGLY). The Cytoplasmic segment spans residues 239 to 253 (LHTLLAISFFSERKC). Residues 254 to 275 (LQAFVLFGWGSPAIFVALWAVT) form a helical membrane-spanning segment. The Extracellular portion of the chain corresponds to 276-290 (RHFLEDFGCWDINSN). An N-linked (GlcNAc...) asparagine glycan is attached at Asn290. The helical transmembrane segment at 291–314 (ASIWWVIRGPVILSIVINFIFFIN) threads the bilayer. The Cytoplasmic portion of the chain corresponds to 315–339 (ILRILMRKLRTQETRGNETHHYKRL). Residues 340 to 355 (AKSTLLLIPLFGIHYI) form a helical membrane-spanning segment. Residues 356–366 (VFAFSPEGAME) lie on the Extracellular side of the membrane. Residues 367–390 (VQLFFELALGSFQGLVVAVLYCFL) traverse the membrane as a helical segment. The Cytoplasmic segment spans residues 391 to 447 (NGELEVQKKWRQWHLQEFPLRPVALSNSFSNATNGPTHSTKAGTSEQSRSIPGANVI). Over residues 423–440 (TNGPTHSTKAGTSEQSRS) the composition is skewed to polar residues. The interval 423-447 (TNGPTHSTKAGTSEQSRSIPGANVI) is disordered.

Belongs to the G-protein coupled receptor 2 family. Post-translationally, phosphorylated on Ser and Thr residues at the cytoplasmic C-terminus by G protein-coupled receptor kinases (GRKs). In terms of tissue distribution, in brain, expressed in the hippocampal CA1 region, the lower layer of cerebral cortex, the anterior olfactory nuclei, the anterior ventrolateral thalamus, the lateral region of hypothalamus, substantia nigra, tegmental area and central nucleus of the inferior colliculus, the ventral supramamillary nucleus and the cerebellum. Expressed in brown adipocytes: expression predominates in mature brown adipocytes (at protein level). Detected in the renal medulla, where it localized predominantly on the basolateral membranes of cells in the collecting ducts (blue arrow) and the ascending thick segments of the loop of Henle.

It is found in the cell membrane. It localises to the basolateral cell membrane. G protein-coupled receptor activated by secretin (SCT), which is involved in different processes such as regulation of the pH of the duodenal content, food intake and water homeostasis. Ligand binding causes a conformation change that triggers signaling via guanine nucleotide-binding proteins (G proteins) and activates cAMP-dependent pathway. Upon binding to secretin, regulates the pH of the duodenum by (1) inhibiting the secretion of gastric acid from the parietal cells of the stomach and (2) stimulating the production of bicarbonate (NaHCO(3)) from the ductal cells of the pancreas. In addition to regulating the pH of the duodenal content, plays a central role in diet induced thermogenesis: acts as a non-sympathetic brown fat (BAT) activator mediating prandial thermogenesis, which consequentially induces satiation. Mechanistically, secretin released by the gut after a meal binds to secretin receptor (SCTR) in brown adipocytes, activating brown fat thermogenesis by stimulating lipolysis, which is sensed in the brain and promotes satiation. Also able to stimulate lipolysis in white adipocytes. Also plays an important role in cellular osmoregulation by regulating renal water reabsorption. Also plays a role in the central nervous system: required for synaptic plasticity. The polypeptide is Secretin receptor (Mus musculus (Mouse)).